Reading from the N-terminus, the 412-residue chain is Protein Mb3436c (412 aa).

N6-(pyridoxal phosphate)lysine is present on lysine 227.

The protein belongs to the DegT/DnrJ/EryC1 family.

This is Protein Mb3436c from Mycobacterium bovis (strain ATCC BAA-935 / AF2122/97).